The sequence spans 201 residues: MQTSPLLETLMEALRCLPGVGPKSAQRMAFQLLQRDRSGGMRLAQALTRAMSEIGHCADCRTFTEQDICTICANPRRQQNGQICVVESPADIHAIEQTGQFAGRYFVLMGHLSPMDGIGPGDIGLDRLEQRLEKESVTEVILATNPTVEGDATANYIAEMCGQYGVVASRIAHGVPVGGELEMVDGTTLSHSLAGRHVIKF.

A C4-type zinc finger spans residues 57 to 72; the sequence is CADCRTFTEQDICTIC. Positions 81–176 constitute a Toprim domain; it reads GQICVVESPA…VASRIAHGVP (96 aa).

It belongs to the RecR family.

May play a role in DNA repair. It seems to be involved in an RecBC-independent recombinational process of DNA repair. It may act with RecF and RecO. The protein is Recombination protein RecR of Serratia proteamaculans (strain 568).